The sequence spans 66 residues: Beta-toxin Cbo2 (66 aa).

Residues 1-66 form the LCN-type CS-alpha/beta domain; sequence KEGYIVNYHD…VWPLPKKTCN (66 aa). Cystine bridges form between C12–C65, C16–C41, C25–C46, and C29–C48. N66 is modified (asparagine amide).

Belongs to the long (4 C-C) scorpion toxin superfamily. Sodium channel inhibitor family. Beta subfamily. In terms of tissue distribution, expressed by the venom gland.

Its subcellular location is the secreted. Functionally, beta toxins bind voltage-independently at site-4 of sodium channels and shift the voltage of activation toward more negative potentials thereby affecting sodium channel activation and promoting spontaneous and repetitive firing. A mixture of Cbo2 and Cbo3 is weakly active on the human voltage-gated sodium channels Nav1.4/SCN4A and Nav1.6/SCN8A when tested at 200 nM. In vivo, is toxic to mice when intraperitoneally injected. The sequence is that of Beta-toxin Cbo2 from Centruroides bonito (Scorpion).